A 33-amino-acid polypeptide reads, in one-letter code: Photosystem II reaction center protein Psb30 (33 aa).

A helical membrane pass occupies residues 5–25 (VIAQLTMLTIAVITGPLVIFF).

Belongs to the Psb30/Ycf12 family. In terms of assembly, PSII is composed of 1 copy each of membrane proteins PsbA, PsbB, PsbC, PsbD, PsbE, PsbF, PsbH, PsbI, PsbJ, PsbK, PsbL, PsbM, PsbT, PsbX, PsbY, PsbZ, Psb30/Ycf12, peripheral proteins of the oxygen-evolving complex and a large number of cofactors. It forms dimeric complexes.

It localises to the plastid. The protein resides in the chloroplast thylakoid membrane. A core subunit of photosystem II (PSII), probably helps stabilize the reaction center. In Welwitschia mirabilis (Tree tumbo), this protein is Photosystem II reaction center protein Psb30.